We begin with the raw amino-acid sequence, 150 residues long: Protein E6 (150 aa).

Zinc fingers lie at residues 31-67 (CVFCRNALTTAEIYAYAYKNLKVVWRDNFPFAACACC) and 104-140 (CYLCHKPLCEIEKLKHILGKARFIKLNNQWKGRCLHC).

The protein belongs to the papillomaviridae E6 protein family. In terms of assembly, forms homodimers. Interacts with ubiquitin-protein ligase UBE3A/E6-AP; this interaction stimulates UBE3A ubiquitin activity. Interacts with host TP53 and EP300; this interaction inhibits TP53 activity.

Its subcellular location is the host cytoplasm. The protein localises to the host nucleus. Functionally, plays a major role in the induction and maintenance of cellular transformation. E6 associates with host UBE3A/E6-AP ubiquitin-protein ligase and modulates its activity. Sequesters tumor suppressor TP53 in the host cytoplasm and modulates its activity by interacting with host EP300 that results in the reduction of TP53 acetylation and activation. In turn, apoptosis induced by DNA damage is inhibited. E6 also protects host keratinocytes from apoptosis by mediating the degradation of host BAK1. May also inhibit host immune response. The sequence is that of Protein E6 from Human papillomavirus 11.